The primary structure comprises 404 residues: Probable sugar efflux transporter (404 aa).

Transmembrane regions (helical) follow at residues 15 to 35, 51 to 71, 85 to 105, 109 to 129, 137 to 157, 168 to 188, 209 to 229, 245 to 265, 276 to 296, 299 to 319, 333 to 353, and 363 to 383; these read VITFALAGFVFNTTEFIPVAL, GLIITVYAWVVSLMSLPFMLL, LVLFILSHLLSVIAWDFWVLV, IGVALTHSIFWAITASLVIRV, QAIGLLAIGCSLAMILGLPLG, ATFAIIALIAIGILCLFYQLL, PLLLGLYALTMIIISAHFTAY, SMATFVLFVFGLSGITASLLF, FILFSMGLLTATLLLLFIASQ, WTMFLLTFFWGIGIAGIGLGL, VAMAIYSGIYNIGIGAGALLG, and AYIGVAGALFAVFGLVLFILV.

This sequence belongs to the major facilitator superfamily. SotB (TC 2.A.1.2) family.

Its subcellular location is the cell inner membrane. In terms of biological role, involved in the efflux of sugars. The physiological role may be the reduction of the intracellular concentration of toxic sugars or sugar metabolites. The polypeptide is Probable sugar efflux transporter (Pasteurella multocida (strain Pm70)).